The following is a 352-amino-acid chain: UDP-N-acetylglucosamine--N-acetylmuramyl-(pentapeptide) pyrophosphoryl-undecaprenol N-acetylglucosamine transferase (352 aa).

UDP-N-acetyl-alpha-D-glucosamine-binding residues include Ser195 and Gln287.

Belongs to the glycosyltransferase 28 family. MurG subfamily.

Its subcellular location is the cell membrane. The catalysed reaction is Mur2Ac(oyl-L-Ala-gamma-D-Glu-L-Lys-D-Ala-D-Ala)-di-trans,octa-cis-undecaprenyl diphosphate + UDP-N-acetyl-alpha-D-glucosamine = beta-D-GlcNAc-(1-&gt;4)-Mur2Ac(oyl-L-Ala-gamma-D-Glu-L-Lys-D-Ala-D-Ala)-di-trans,octa-cis-undecaprenyl diphosphate + UDP + H(+). It functions in the pathway cell wall biogenesis; peptidoglycan biosynthesis. Cell wall formation. Catalyzes the transfer of a GlcNAc subunit on undecaprenyl-pyrophosphoryl-MurNAc-pentapeptide (lipid intermediate I) to form undecaprenyl-pyrophosphoryl-MurNAc-(pentapeptide)GlcNAc (lipid intermediate II). The chain is UDP-N-acetylglucosamine--N-acetylmuramyl-(pentapeptide) pyrophosphoryl-undecaprenol N-acetylglucosamine transferase from Streptococcus pneumoniae (strain Hungary19A-6).